The following is a 94-amino-acid chain: Putative pterin-4-alpha-carbinolamine dehydratase (94 aa).

This sequence belongs to the pterin-4-alpha-carbinolamine dehydratase family.

The catalysed reaction is (4aS,6R)-4a-hydroxy-L-erythro-5,6,7,8-tetrahydrobiopterin = (6R)-L-erythro-6,7-dihydrobiopterin + H2O. This chain is Putative pterin-4-alpha-carbinolamine dehydratase, found in Chloroflexus aggregans (strain MD-66 / DSM 9485).